We begin with the raw amino-acid sequence, 542 residues long: Organic anion transporter 3 (542 aa).

At 1–9 (MTFSEILDR) the chain is on the cytoplasmic side. Position 4 is a phosphoserine (S4). Residues 10-30 (VGSMGHFQFLHVAILGLPILN) form a helical membrane-spanning segment. The Extracellular segment spans residues 31-123 (MANHNLLQIF…LVCNSNKLKE (93 aa)). N86 and N102 each carry an N-linked (GlcNAc...) asparagine glycan. The chain crosses the membrane as a helical span at residues 124-144 (MAQSIFMAGILIGGLVLGDLS). At 145–154 (DRFGRRPILT) the chain is on the cytoplasmic side. A helical membrane pass occupies residues 155–175 (CSYLLLAASGSGAAFSPTFPI). Residue Y176 is a topological domain, extracellular. A helical membrane pass occupies residues 177–197 (MVFRFLCGFGISGITLSTVIL). The Cytoplasmic segment spans residues 198–212 (NVEWVPTRMRAIMST). Residues 213–233 (ALGYCYTFGQFILPGLAYAIP) traverse the membrane as a helical segment. Residues 234-236 (QWR) are Extracellular-facing. A helical membrane pass occupies residues 237-257 (WLQLTVSIPFFVFFLSSWWTP). The Cytoplasmic segment spans residues 258 to 327 (ESIRWLVLSG…FRIPMLRRMT (70 aa)). A helical membrane pass occupies residues 328–348 (FCLSLAWFATGFAYYSLAMGV). At 349-354 (EEFGVN) the chain is on the extracellular side. Residues 355-375 (LYILQIIFGGVDVPAKFITIL) form a helical membrane-spanning segment. Residues 376-386 (SLSYLGRHTTQ) lie on the Cytoplasmic side of the membrane. A helical transmembrane segment spans residues 387 to 407 (AAALLLAGGAILALTFVPLDL). At 408 to 411 (QTVR) the chain is on the extracellular side. The chain crosses the membrane as a helical span at residues 412 to 432 (TVLAVFGKGCLSSSFSCLFLY). Topologically, residues 433–471 (TSELYPTVIRQTGMGVSNLWTRVGSMVSPLVKITGEVQP) are cytoplasmic. The chain crosses the membrane as a helical span at residues 472–492 (FIPNIIYGITALLGGSAALFL). At 493–542 (PETLNQPLPETIEDLENWSLRAKKPKQEPEVEKASQRIPLQPHGPGLGSS) the chain is on the extracellular side. Residues 515 to 542 (KKPKQEPEVEKASQRIPLQPHGPGLGSS) form a disordered region. Residues 517-527 (PKQEPEVEKAS) are compositionally biased toward basic and acidic residues.

Belongs to the major facilitator (TC 2.A.1) superfamily. Organic cation transporter (TC 2.A.1.19) family. Strongly expressed in kidney. Weaker expression in brain and skeletal muscle. Expressed in adrenal glands.

The protein localises to the basolateral cell membrane. It carries out the reaction estrone 3-sulfate(out) + glutarate(in) = estrone 3-sulfate(in) + glutarate(out). It catalyses the reaction estrone 3-sulfate(in) + 2-oxoglutarate(out) = estrone 3-sulfate(out) + 2-oxoglutarate(in). The catalysed reaction is glutarate(in) + 2-oxoglutarate(out) = glutarate(out) + 2-oxoglutarate(in). The enzyme catalyses urate(in) + 2-oxoglutarate(out) = urate(out) + 2-oxoglutarate(in). It carries out the reaction taurocholate(out) + glutarate(in) = taurocholate(in) + glutarate(out). It catalyses the reaction dehydroepiandrosterone 3-sulfate(out) + glutarate(in) = dehydroepiandrosterone 3-sulfate(in) + glutarate(out). The catalysed reaction is prostaglandin F2alpha(out) + glutarate(in) = prostaglandin F2alpha(in) + glutarate(out). The enzyme catalyses prostaglandin F2alpha(out) + 2-oxoglutarate(in) = prostaglandin F2alpha(in) + 2-oxoglutarate(out). It carries out the reaction (R)-carnitine(out) + 2-oxoglutarate(in) = (R)-carnitine(in) + 2-oxoglutarate(out). It catalyses the reaction glutarate(in) + (R)-carnitine(out) = glutarate(out) + (R)-carnitine(in). The catalysed reaction is prostaglandin E2(out) + 2-oxoglutarate(in) = prostaglandin E2(in) + 2-oxoglutarate(out). The enzyme catalyses prostaglandin E2(out) + glutarate(in) = prostaglandin E2(in) + glutarate(out). It carries out the reaction urate(in) + glutarate(out) = urate(out) + glutarate(in). It catalyses the reaction taurocholate(out) + 2-oxoglutarate(in) = taurocholate(in) + 2-oxoglutarate(out). The catalysed reaction is dehydroepiandrosterone 3-sulfate(out) + 2-oxoglutarate(in) = dehydroepiandrosterone 3-sulfate(in) + 2-oxoglutarate(out). The enzyme catalyses kynurenate(out) + a dicarboxylate(in) = kynurenate(in) + a dicarboxylate(out). It carries out the reaction (indol-3-yl)acetate(out) + a dicarboxylate(in) = (indol-3-yl)acetate(in) + a dicarboxylate(out). It catalyses the reaction indoxyl sulfate(out) + a dicarboxylate(in) = indoxyl sulfate(in) + a dicarboxylate(out). The catalysed reaction is N-benzoylglycine(out) + a dicarboxylate(in) = N-benzoylglycine(in) + a dicarboxylate(out). The enzyme catalyses 3-carboxy-4-methyl-5-propyl-2-furanpropanoate(out) + a dicarboxylate(in) = 3-carboxy-4-methyl-5-propyl-2-furanpropanoate(in) + a dicarboxylate(out). It carries out the reaction (6R)-L-erythro-5,6,7,8-tetrahydrobiopterin(out) + a dicarboxylate(in) = (6R)-L-erythro-5,6,7,8-tetrahydrobiopterin(in) + a dicarboxylate(out). It catalyses the reaction L-erythro-7,8-dihydrobiopterin(out) + a dicarboxylate(in) = L-erythro-7,8-dihydrobiopterin(in) + a dicarboxylate(out). The catalysed reaction is L-sepiapterin(out) + a dicarboxylate(in) = L-sepiapterin(in) + a dicarboxylate(out). Functionally, functions as an organic anion/dicarboxylate exchanger that couples organic anion uptake indirectly to the sodium gradient. Transports organic anions such as estrone 3-sulfate (E1S) and urate in exchange for dicarboxylates such as glutarate or ketoglutarate (2-oxoglutarate). Plays an important role in the excretion of endogenous and exogenous organic anions, especially from the kidney and the brain. E1S transport is pH- and chloride-dependent and may also involve E1S/cGMP exchange. Responsible for the transport of prostaglandin E2 (PGE2) and prostaglandin F2(alpha) (PGF2(alpha)) in the basolateral side of the renal tubule. Involved in the transport of neuroactive tryptophan metabolites kynurenate and xanthurenate. Functions as a biopterin transporters involved in the uptake and the secretion of coenzymes tetrahydrobiopterin (BH4), dihydrobiopterin (BH2) and sepiapterin to urine, thereby determining baseline levels of blood biopterins. May be involved in the basolateral transport of steviol, a metabolite of the popular sugar substitute stevioside. May participate in the detoxification/ renal excretion of drugs and xenobiotics, such as the histamine H(2)-receptor antagonists fexofenadine and cimetidine, the antibiotic benzylpenicillin (PCG), the anionic herbicide 2,4-dichloro-phenoxyacetate (2,4-D), the diagnostic agent p-aminohippurate (PAH), the antiviral acyclovir (ACV), and the mycotoxin ochratoxin (OTA), by transporting these exogenous organic anions across the cell membrane in exchange for dicarboxylates such as 2-oxoglutarate. Contributes to the renal uptake of potent uremic toxins (indoxyl sulfate (IS), indole acetate (IA), hippurate/N-benzoylglycine (HA) and 3-carboxy-4-methyl-5-propyl-2-furanpropionate (CMPF)), pravastatin, PCG, E1S and dehydroepiandrosterone sulfate (DHEAS), and is partly involved in the renal uptake of temocaprilat (an angiotensin-converting enzyme (ACE) inhibitor). May contribute to the release of cortisol in the adrenals. Involved in one of the detoxification systems on the choroid plexus (CP), removes substrates such as E1S or taurocholate (TC), PCG, 2,4-D and PAH, from the cerebrospinal fluid (CSF) to the blood for eventual excretion in urine and bile. Also contributes to the uptake of several other organic compounds such as the prostanoids prostaglandin E(2) and prostaglandin F(2-alpha), L-carnitine, and the therapeutic drugs allopurinol, 6-mercaptopurine (6-MP) and 5-fluorouracil (5-FU). Mediates the transport of PAH, PCG, and the statins pravastatin and pitavastatin, from the cerebrum into the blood circulation across the blood-brain barrier (BBB). In summary, plays a role in the efflux of drugs and xenobiotics, helping reduce their undesired toxicological effects on the body. The sequence is that of Organic anion transporter 3 from Homo sapiens (Human).